The primary structure comprises 240 residues: tRNA1(Val) (adenine(37)-N6)-methyltransferase (240 aa).

This sequence belongs to the methyltransferase superfamily. tRNA (adenine-N(6)-)-methyltransferase family.

The protein resides in the cytoplasm. The enzyme catalyses adenosine(37) in tRNA1(Val) + S-adenosyl-L-methionine = N(6)-methyladenosine(37) in tRNA1(Val) + S-adenosyl-L-homocysteine + H(+). Its function is as follows. Specifically methylates the adenine in position 37 of tRNA(1)(Val) (anticodon cmo5UAC). The polypeptide is tRNA1(Val) (adenine(37)-N6)-methyltransferase (Photobacterium profundum (strain SS9)).